Reading from the N-terminus, the 955-residue chain is Coiled-coil domain-containing protein 146 (955 aa).

Acidic residues predominate over residues 1-17; it reads MEDSSTDTEKEEEEEKD. The interval 1 to 22 is disordered; sequence MEDSSTDTEKEEEEEKDEKDQE. 5 coiled-coil regions span residues 114 to 141, 169 to 321, 400 to 461, 534 to 640, and 667 to 832; these read EAFS…KERE, GEME…AREN, STLS…LLRM, KAHQ…RNES, and NGEI…MKQA.

In terms of assembly, interacts with CCDC38 and CCDC42. Interacts with intraflagellar transport proteins IFT20 and IFT88. (Microbial infection) Interacts with Chlamydia trachomatis incM/YT288. In host cells infected with C.trachomatis incM, CCDC146 is recruited to the periphery of the pathogen-containing vacuole but recruitment is not dependent on incM. As to expression, widely expressed.

The protein localises to the cytoplasm. Its subcellular location is the cytoskeleton. The protein resides in the microtubule organizing center. It localises to the centrosome. It is found in the centriole. The protein localises to the flagellum axoneme. Its subcellular location is the cilium basal body. The protein resides in the midbody. In terms of biological role, essential for sperm flagellum biogenesis and male fertility. This chain is Coiled-coil domain-containing protein 146 (CCDC146), found in Homo sapiens (Human).